Reading from the N-terminus, the 703-residue chain is Polyribonucleotide nucleotidyltransferase (703 aa).

Residues D488 and D494 each contribute to the Mg(2+) site. Residues 555-614 enclose the KH domain; that stretch reads PRLYVMKINPEKIRDVIGKGGAVIRALTEETGTQINIEEDGTITIASNDSAKADEAKRRI. The S1 motif domain maps to 624–692; that stretch reads GKVYEGAITK…EKGRVKLSMK (69 aa).

It belongs to the polyribonucleotide nucleotidyltransferase family. It depends on Mg(2+) as a cofactor.

The protein resides in the cytoplasm. It carries out the reaction RNA(n+1) + phosphate = RNA(n) + a ribonucleoside 5'-diphosphate. Involved in mRNA degradation. Catalyzes the phosphorolysis of single-stranded polyribonucleotides processively in the 3'- to 5'-direction. This chain is Polyribonucleotide nucleotidyltransferase, found in Polaromonas naphthalenivorans (strain CJ2).